The following is a 603-amino-acid chain: Protein SHORT-ROOT 2 (603 aa).

2 disordered regions span residues 11-58 (HHHH…HSHS) and 106-140 (DFSS…SSAG). Over residues 31-44 (SYPSSRGSTSSPSS) the composition is skewed to low complexity. The segment covering 45-58 (HHTHNHTYYHHSHS) has biased composition (basic residues). The span at 108-125 (SSSSSSRQFHSGTGAPSS) shows a compositional bias: low complexity. In terms of domain architecture, GRAS spans 179–602 (AAPSSSGRWA…QPVVWASAWK (424 aa)). Positions 186-249 (RWAAQLLMEC…LTTSGPRTLR (64 aa)) are leucine repeat I (LRI). Positions 268–354 (ALKFQELSPW…DTPHLSITTV (87 aa)) are VHIID. The VHIID motif lies at 318 to 322 (LHILD). A leucine repeat II (LRII) region spans residues 370–406 (EIGQRLEKFARLMGVPFSFRAVHHSGDLADLDLAALD). The PFYRE stretch occupies residues 416 to 514 (LAVNCVNALR…ERAVGRAIVD (99 aa)). Residues 517–602 (SCPASQSAER…QPVVWASAWK (86 aa)) are SAW.

This sequence belongs to the GRAS family. As to quaternary structure, does not interact with SCR1.

The protein localises to the nucleus. Functionally, putative transcription factor involved in asymmetric cell division. This is Protein SHORT-ROOT 2 (SHR2) from Oryza sativa subsp. japonica (Rice).